We begin with the raw amino-acid sequence, 421 residues long: Serine hydroxymethyltransferase (421 aa).

Residues Leu-121 and Gly-125–Leu-127 each bind (6S)-5,6,7,8-tetrahydrofolate. Lys-230 carries the post-translational modification N6-(pyridoxal phosphate)lysine. Residues Glu-246 and Ser-354 to Phe-356 contribute to the (6S)-5,6,7,8-tetrahydrofolate site.

Belongs to the SHMT family. In terms of assembly, homodimer. Pyridoxal 5'-phosphate is required as a cofactor.

The protein localises to the cytoplasm. The catalysed reaction is (6R)-5,10-methylene-5,6,7,8-tetrahydrofolate + glycine + H2O = (6S)-5,6,7,8-tetrahydrofolate + L-serine. It participates in one-carbon metabolism; tetrahydrofolate interconversion. It functions in the pathway amino-acid biosynthesis; glycine biosynthesis; glycine from L-serine: step 1/1. Its function is as follows. Catalyzes the reversible interconversion of serine and glycine with tetrahydrofolate (THF) serving as the one-carbon carrier. This reaction serves as the major source of one-carbon groups required for the biosynthesis of purines, thymidylate, methionine, and other important biomolecules. Also exhibits THF-independent aldolase activity toward beta-hydroxyamino acids, producing glycine and aldehydes, via a retro-aldol mechanism. This chain is Serine hydroxymethyltransferase, found in Rickettsia felis (strain ATCC VR-1525 / URRWXCal2) (Rickettsia azadi).